A 245-amino-acid polypeptide reads, in one-letter code: Probable transcriptional regulatory protein Cbei_4222 (245 aa).

It belongs to the TACO1 family.

Its subcellular location is the cytoplasm. The chain is Probable transcriptional regulatory protein Cbei_4222 from Clostridium beijerinckii (strain ATCC 51743 / NCIMB 8052) (Clostridium acetobutylicum).